A 477-amino-acid polypeptide reads, in one-letter code: Glycogen synthase (477 aa).

Residue K15 coordinates ADP-alpha-D-glucose.

The protein belongs to the glycosyltransferase 1 family. Bacterial/plant glycogen synthase subfamily.

It carries out the reaction [(1-&gt;4)-alpha-D-glucosyl](n) + ADP-alpha-D-glucose = [(1-&gt;4)-alpha-D-glucosyl](n+1) + ADP + H(+). Its pathway is glycan biosynthesis; glycogen biosynthesis. Its function is as follows. Synthesizes alpha-1,4-glucan chains using ADP-glucose. This is Glycogen synthase from Cronobacter sakazakii (strain ATCC BAA-894) (Enterobacter sakazakii).